A 515-amino-acid polypeptide reads, in one-letter code: Carboxyl-terminal-processing peptidase 2, chloroplastic (515 aa).

Residues 198–286 (FKSLRSGTQG…SAVELAIRSG (89 aa)) enclose the PDZ domain. Catalysis depends on charge relay system residues Ser-417 and Lys-442.

Belongs to the peptidase S41A family.

It localises to the plastid. It is found in the chloroplast thylakoid lumen. The catalysed reaction is The enzyme shows specific recognition of a C-terminal tripeptide, Xaa-Yaa-Zaa, in which Xaa is preferably Ala or Leu, Yaa is preferably Ala or Tyr, and Zaa is preferably Ala, but then cleaves at a variable distance from the C-terminus. A typical cleavage is -Ala-Ala-|-Arg-Ala-Ala-Lys-Glu-Asn-Tyr-Ala-Leu-Ala-Ala.. Its function is as follows. Protease involved in the C-terminal processing of the chloroplastic D1 protein of photosystem II. This proteolytic processing is necessary to allow the light-driven assembly of the tetranuclear manganese cluster, which is responsible for photosynthetic water oxidation. In Arabidopsis thaliana (Mouse-ear cress), this protein is Carboxyl-terminal-processing peptidase 2, chloroplastic (CTPA2).